Here is a 207-residue protein sequence, read N- to C-terminus: MSDQLKIKVTRRTDFGKGAARQARRAGLIPAVVYGHGQEPVHLLLPAQETTLAVRNPNALLTVVNEAGEEHLVLPKDIQRHAIKDTVDHLDLIEVRRGEKVVVEVTVQVEGEVAPGTEYVLDYVTVPVEADATDLPEAVTISVEGREAGDHVYAPDVQVPAGATLQLEDDIVIATVNEVVEQDLGDESVQEEQAAESAEGESEGSED.

Positions glutamine 182–aspartate 207 are disordered.

This sequence belongs to the bacterial ribosomal protein bL25 family. CTC subfamily. As to quaternary structure, part of the 50S ribosomal subunit; part of the 5S rRNA/L5/L18/L25 subcomplex. Contacts the 5S rRNA. Binds to the 5S rRNA independently of L5 and L18.

Functionally, this is one of the proteins that binds to the 5S RNA in the ribosome where it forms part of the central protuberance. The protein is Large ribosomal subunit protein bL25 of Micrococcus luteus (strain ATCC 4698 / DSM 20030 / JCM 1464 / CCM 169 / CCUG 5858 / IAM 1056 / NBRC 3333 / NCIMB 9278 / NCTC 2665 / VKM Ac-2230) (Micrococcus lysodeikticus).